We begin with the raw amino-acid sequence, 157 residues long: Small ribosomal subunit protein uS7 (157 aa).

This sequence belongs to the universal ribosomal protein uS7 family. In terms of assembly, part of the 30S ribosomal subunit. Contacts proteins S9 and S11.

Its function is as follows. One of the primary rRNA binding proteins, it binds directly to 16S rRNA where it nucleates assembly of the head domain of the 30S subunit. Is located at the subunit interface close to the decoding center, probably blocks exit of the E-site tRNA. This is Small ribosomal subunit protein uS7 from Chlamydia trachomatis serovar A (strain ATCC VR-571B / DSM 19440 / HAR-13).